A 54-amino-acid chain; its full sequence is Ovomucoid (54 aa).

The Kazal-like domain occupies 4 to 54 (VDCSDYPRPDCTLEYMPLCGSDNKTYGNKCNFCNAVVDSNGTLTLSHFGKC). Intrachain disulfides connect C6-C36, C14-C33, and C22-C54. N43 carries an N-linked (GlcNAc...) asparagine glycan.

The protein localises to the secreted. The sequence is that of Ovomucoid from Dendrocygna eytoni (Plumed whistling-duck).